A 186-amino-acid polypeptide reads, in one-letter code: UPF0149 protein Pfl01_5435 (186 aa).

Belongs to the UPF0149 family.

The sequence is that of UPF0149 protein Pfl01_5435 from Pseudomonas fluorescens (strain Pf0-1).